The sequence spans 72 residues: Bowman-Birk type trypsin inhibitor (72 aa).

7 cysteine pairs are disulfide-bonded: Cys-12-Cys-66, Cys-13-Cys-28, Cys-16-Cys-62, Cys-18-Cys-26, Cys-36-Cys-43, Cys-40-Cys-55, and Cys-45-Cys-53.

It belongs to the Bowman-Birk serine protease inhibitor family.

The chain is Bowman-Birk type trypsin inhibitor from Vigna radiata var. radiata (Mung bean).